We begin with the raw amino-acid sequence, 231 residues long: Orotate phosphoribosyltransferase (231 aa).

5-phospho-alpha-D-ribose 1-diphosphate is bound by residues K27, 79-80 (YK), R106, K107, K110, H112, and 133-141 (DDVMTAGTA). Orotate-binding residues include T137 and R166.

It belongs to the purine/pyrimidine phosphoribosyltransferase family. PyrE subfamily. In terms of assembly, homodimer. Requires Mg(2+) as cofactor.

The catalysed reaction is orotidine 5'-phosphate + diphosphate = orotate + 5-phospho-alpha-D-ribose 1-diphosphate. It participates in pyrimidine metabolism; UMP biosynthesis via de novo pathway; UMP from orotate: step 1/2. Its function is as follows. Catalyzes the transfer of a ribosyl phosphate group from 5-phosphoribose 1-diphosphate to orotate, leading to the formation of orotidine monophosphate (OMP). The protein is Orotate phosphoribosyltransferase of Bifidobacterium longum (strain NCC 2705).